Reading from the N-terminus, the 90-residue chain is Evasin P458 (90 aa).

The first 24 residues, 1 to 24 (MEVKTFAFLQIAVLIAFSLHSASA), serve as a signal peptide directing secretion. Disulfide bonds link Cys-44-Cys-63, Cys-48-Cys-65, and Cys-59-Cys-76. Asn-47 carries an N-linked (GlcNAc...) asparagine glycan.

It localises to the secreted. In terms of biological role, salivary chemokine-binding protein which binds to host chemokines CXCL1, CXCL2, CXCL3, CXCL5, CXCL6 and CXCL13. This chain is Evasin P458, found in Ixodes ricinus (Common tick).